The sequence spans 123 residues: MHIIAKSILLMAVSFLVIIFTSTIYSELIEIGKYRYIDKVDREITSEVMNAVVLANEGNITLYKKINLNCKVIFENNSFTIIFQNKTYVHKFNNNIRFFKNEISDISKISCKKVNNTYMIYIE.

A helical membrane pass occupies residues 1–21 (MHIIAKSILLMAVSFLVIIFT).

It is found in the membrane. This is an uncharacterized protein from Methanocaldococcus jannaschii (strain ATCC 43067 / DSM 2661 / JAL-1 / JCM 10045 / NBRC 100440) (Methanococcus jannaschii).